The following is a 371-amino-acid chain: MLGSCGAGLVRGLRAETQAWLWGTRGRSLALVHAARGLHAANWQPSPGQGPRGRPLSLSAAAVVNSAPRPLQPYLRLMRLDKPIGTWLLYLPCTWSIGLAADPGCLPDWYMLSLFGTGAVLMRGAGCTINDMWDRDYDKKVTRTASRPIAAGDISTFRSFVFLGGQLTLALGVLLCLNYYSIALGAASLLLVTTYPLMKRITYWPQLALGLTFNWGALLGWSAVKGSCDPSVCLPLYFSGIMWTLIYDTIYAHQDKKDDALIGLKSTALLFREDTKKWLSGFSVAMLGALSLVGVNSGQTMPYYTALAAVGAHLAHQIYTLDINRPEDCWEKFTSNRTIGLIIFLGIVLGNLCKAKETDKTRKNIENRMEN.

A mitochondrion-targeting transit peptide spans 1–45; the sequence is MLGSCGAGLVRGLRAETQAWLWGTRGRSLALVHAARGLHAANWQP. The Mitochondrial matrix portion of the chain corresponds to 46–83; sequence SPGQGPRGRPLSLSAAAVVNSAPRPLQPYLRLMRLDKP. Residues 84–104 traverse the membrane as a helical segment; it reads IGTWLLYLPCTWSIGLAADPG. Residues 105 to 108 lie on the Mitochondrial intermembrane side of the membrane; sequence CLPD. The chain crosses the membrane as a helical span at residues 109–129; that stretch reads WYMLSLFGTGAVLMRGAGCTI. Over 130–171 the chain is Mitochondrial matrix; that stretch reads NDMWDRDYDKKVTRTASRPIAAGDISTFRSFVFLGGQLTLAL. Residues 172-192 traverse the membrane as a helical segment; that stretch reads GVLLCLNYYSIALGAASLLLV. Residues 193–200 are Mitochondrial intermembrane-facing; that stretch reads TTYPLMKR. The chain crosses the membrane as a helical span at residues 201 to 221; the sequence is ITYWPQLALGLTFNWGALLGW. At 222–231 the chain is on the mitochondrial matrix side; sequence SAVKGSCDPS. Residues 232–252 form a helical membrane-spanning segment; sequence VCLPLYFSGIMWTLIYDTIYA. Residues 253–277 lie on the Mitochondrial intermembrane side of the membrane; that stretch reads HQDKKDDALIGLKSTALLFREDTKK. The helical transmembrane segment at 278-298 threads the bilayer; sequence WLSGFSVAMLGALSLVGVNSG. Over 299–300 the chain is Mitochondrial matrix; sequence QT. A helical transmembrane segment spans residues 301–321; the sequence is MPYYTALAAVGAHLAHQIYTL. Residues 322–332 lie on the Mitochondrial intermembrane side of the membrane; that stretch reads DINRPEDCWEK. The helical transmembrane segment at 333-353 threads the bilayer; that stretch reads FTSNRTIGLIIFLGIVLGNLC. Over 354–371 the chain is Mitochondrial matrix; sequence KAKETDKTRKNIENRMEN.

It belongs to the UbiA prenyltransferase family. Requires Mg(2+) as cofactor.

It is found in the mitochondrion inner membrane. The enzyme catalyses an all-trans-polyprenyl diphosphate + 4-hydroxybenzoate = a 4-hydroxy-3-(all-trans-polyprenyl)benzoate + diphosphate. The catalysed reaction is all-trans-decaprenyl diphosphate + 4-hydroxybenzoate = 4-hydroxy-3-(all-trans-decaprenyl)benzoate + diphosphate. It catalyses the reaction all-trans-nonaprenyl diphosphate + 4-hydroxybenzoate = 4-hydroxy-3-(all-trans-nonaprenyl)benzoate + diphosphate. Its pathway is cofactor biosynthesis; ubiquinone biosynthesis. In terms of biological role, mediates the second step in the final reaction sequence of coenzyme Q (CoQ) biosynthesis. Catalyzes the prenylation of para-hydroxybenzoate (PHB) with an all-trans polyprenyl donor (such as all-trans-decaprenyl diphosphate). The length of the polyprenyl side chain varies depending on the species, in humans, the side chain is comprised of 10 isoprenyls (decaprenyl) producing CoQ10 (also known as ubiquinone), whereas rodents predominantly generate CoQ9. However, this specificity is not complete, human tissues have low amounts of CoQ9 and rodent organs contain some CoQ10. Plays a central role in the biosynthesis of CoQ10. CoQ10 is a vital molecule that transports electrons from mitochondrial respiratory chain complexes. CoQs also function as cofactors for uncoupling protein and play a role as regulators of the extracellularly-induced ceramide-dependent apoptotic pathway. Regulates mitochondrial permeability transition pore (mPTP) opening and ROS production (pivotal events in cell death) in a tissue specific manner. The polypeptide is 4-hydroxybenzoate polyprenyltransferase, mitochondrial (Bos taurus (Bovine)).